Reading from the N-terminus, the 1139-residue chain is Protein kinase C-like (1139 aa).

The 67-residue stretch at 1 to 67 (MNEDEAIQNI…LRDIQLRKVG (67 aa)) folds into the REM-1 1 domain. The disordered stretch occupies residues 72-132 (GMSLGADDAG…PGPGAASKAR (61 aa)). Residues 142-219 (KYDTPYLGPR…LKRYEELHVD (78 aa)) form the REM-1 2 domain. The C2 domain maps to 225–343 (AQDDDSINTP…MRRKRIEAEM (119 aa)). The interval 349 to 404 (VSADRMGSTGAPSQFPMSPTSGSFGGSPQAPGGGQGQAPGPFGDPAPQPQVVTGPI) is disordered. Residues 358–368 (GAPSQFPMSPT) are compositionally biased toward polar residues. 2 consecutive Phorbol-ester/DAG-type zinc fingers follow at residues 454–502 (GHKF…VTKC) and 522–572 (PHRF…PDFC). Disordered regions lie at residues 590–637 (KQRQ…TPSA), 649–668 (QTSP…LSAA), and 679–804 (QGRT…TDPG). Positions 594–614 (QKTTSLSEKTLRSGATKSPTT) are enriched in polar residues. Residues 615-629 (AGHGSSASFSSAGAG) show a composition bias toward low complexity. Pro residues-rich tracts occupy residues 723-734 (AQPPAQQRPPQP) and 743-760 (AQMP…PPQP). Over residues 761–793 (GQQYQQQQPAAQKPQPQPPATAQGAAAGPPGSQ) the composition is skewed to low complexity. A Protein kinase domain is found at 814–1073 (FNFLAVLGKG…AQEVMSQPFF (260 aa)). ATP contacts are provided by residues 820 to 828 (LGKGNFGKV) and Lys-843. Asp-939 (proton acceptor) is an active-site residue. In terms of domain architecture, AGC-kinase C-terminal spans 1074–1139 (RNINWDDIYH…RGFSYTADLD (66 aa)).

This sequence belongs to the protein kinase superfamily. AGC Ser/Thr protein kinase family. PKC subfamily.

The enzyme catalyses L-seryl-[protein] + ATP = O-phospho-L-seryl-[protein] + ADP + H(+). It carries out the reaction L-threonyl-[protein] + ATP = O-phospho-L-threonyl-[protein] + ADP + H(+). Its activity is regulated as follows. Stimulated about twofold by phospholipids or phorbol esters. This Hypocrea jecorina (Trichoderma reesei) protein is Protein kinase C-like (pkc1).